Consider the following 270-residue polypeptide: Alpha N-terminal protein methyltransferase 1 (270 aa).

S-adenosyl-L-methionine-binding positions include glycine 114, arginine 119, 137–139, 165–166, and glutamine 180; these read EQN and LQ.

It belongs to the methyltransferase superfamily. NTM1 family.

The enzyme catalyses N-terminal L-alanyl-L-prolyl-L-lysyl-[protein] + 3 S-adenosyl-L-methionine = N-terminal N,N,N-trimethyl-L-alanyl-L-prolyl-L-lysyl-[protein] + 3 S-adenosyl-L-homocysteine + 3 H(+). It catalyses the reaction N-terminal L-seryl-L-prolyl-L-lysyl-[protein] + 3 S-adenosyl-L-methionine = N-terminal N,N,N-trimethyl-L-seryl-L-prolyl-L-lysyl-[protein] + 3 S-adenosyl-L-homocysteine + 3 H(+). The catalysed reaction is N-terminal L-prolyl-L-prolyl-L-lysyl-[protein] + 2 S-adenosyl-L-methionine = N-terminal N,N-dimethyl-L-prolyl-L-prolyl-L-lysyl-[protein] + 2 S-adenosyl-L-homocysteine + 2 H(+). Functionally, alpha-N-methyltransferase that methylates the N-terminus of target proteins containing the N-terminal motif [Ala/Pro/Ser]-Pro-Lys when the initiator Met is cleaved. Specifically catalyzes mono-, di- or tri-methylation of exposed alpha-amino group of Ala or Ser residue in the [Ala/Ser]-Pro-Lys motif and mono- or di-methylation of Pro in the Pro-Pro-Lys motif. This chain is Alpha N-terminal protein methyltransferase 1, found in Dictyostelium discoideum (Social amoeba).